The primary structure comprises 837 residues: Ribosome biogenesis ATPase RIX7 (837 aa).

2 disordered regions span residues 36 to 56 and 149 to 207; these read RSLRQESQGEEGENNEGEEDE and ITST…LKSL. Phosphoserine is present on Ser-42. Acidic residues predominate over residues 43-56; it reads QGEEGENNEGEEDE. Residues 149 to 163 show a composition bias toward polar residues; sequence ITSTWSKSGSVSESI. The segment covering 176-192 has biased composition (basic residues); sequence KSKKRSKEGTCKVKRQK. 246–253 contributes to the ATP binding site; sequence GPPGCGKT. The disordered stretch occupies residues 443–468; sequence PTTATDSSEDNMEIDETANGDESSLK. The span at 449 to 461 shows a compositional bias: acidic residues; sequence SSEDNMEIDETAN. ATP is bound at residue 574–581; sequence GPPGCGKT.

It belongs to the AAA ATPase family.

It localises to the nucleus. It is found in the nucleolus. In terms of biological role, involved in ribosome biogenesis. Seems to be required for restructuring nucleoplasmic 60S pre-ribosomal particles to make them competent for nuclear export. The sequence is that of Ribosome biogenesis ATPase RIX7 (RIX7) from Saccharomyces cerevisiae (strain ATCC 204508 / S288c) (Baker's yeast).